A 299-amino-acid chain; its full sequence is Syntenin-1 (299 aa).

An N-acetylserine modification is found at serine 2. Positions 2-103 (SLYPSLEDLK…VAPVTGNDAG (102 aa)) are interaction with PDCD6IP. Short sequence motifs (LYPX(n)L motif) lie at residues 3–7 (LYPSL), 46–50 (LYPKL), and 50–54 (LYPEL). At serine 6 the chain carries Phosphoserine. Tyrosine 47 is modified (phosphotyrosine). 2 consecutive PDZ domains span residues 115–194 (EVIL…IRDR) and 199–273 (TVTM…IMPT). A 1,2-diacyl-sn-glycero-3-phospho-(1D-myo-inositol-4,5-bisphosphate) is bound at residue 251–252 (KD).

Monomer and homodimer. Interacts with SDC1, SDC2, SDC3, SDC4, NRXN2, EPHA7, EPHB1, NF2 isoform 1, TGFA, IL5RA, NFASC, SDCBP2 and PTPRJ. Interacts with PDCD6IP. Forms a complex with PDCD6IP and SDC2. Interacts (via C-terminus) with TGFBR1. Binds to FZD7; this interaction is increased by inositol trisphosphate (IP3). Interacts with SMO. Post-translationally, phosphorylated on tyrosine residues.

The protein resides in the cell junction. It localises to the focal adhesion. Its subcellular location is the adherens junction. The protein localises to the cell membrane. It is found in the endoplasmic reticulum membrane. The protein resides in the nucleus. It localises to the melanosome. Its subcellular location is the cytoplasm. The protein localises to the cytosol. It is found in the cytoskeleton. The protein resides in the secreted. It localises to the extracellular exosome. Its subcellular location is the membrane raft. Functionally, multifunctional adapter protein involved in diverse array of functions including trafficking of transmembrane proteins, neuro and immunomodulation, exosome biogenesis, and tumorigenesis. Positively regulates TGFB1-mediated SMAD2/3 activation and TGFB1-induced epithelial-to-mesenchymal transition (EMT) and cell migration in various cell types. May increase TGFB1 signaling by enhancing cell-surface expression of TGFR1 by preventing the interaction between TGFR1 and CAV1 and subsequent CAV1-dependent internalization and degradation of TGFR1. In concert with SDC1/4 and PDCD6IP, regulates exosome biogenesis. Regulates migration, growth, proliferation, and cell cycle progression in a variety of cancer types. In adherens junctions may function to couple syndecans to cytoskeletal proteins or signaling components. Seems to couple transcription factor SOX4 to the IL-5 receptor (IL5RA). May also play a role in vesicular trafficking. Seems to be required for the targeting of TGFA to the cell surface in the early secretory pathway. This Mus musculus (Mouse) protein is Syntenin-1 (Sdcbp).